The primary structure comprises 424 residues: Histidine--tRNA ligase (424 aa).

The protein belongs to the class-II aminoacyl-tRNA synthetase family. In terms of assembly, homodimer.

It localises to the cytoplasm. It catalyses the reaction tRNA(His) + L-histidine + ATP = L-histidyl-tRNA(His) + AMP + diphosphate + H(+). The sequence is that of Histidine--tRNA ligase from Salmonella gallinarum (strain 287/91 / NCTC 13346).